The chain runs to 2043 residues: Autophagy-related protein 2 (2043 aa).

Disordered stretches follow at residues 111 to 130 (EKDR…SEAV), 288 to 341 (SASM…LPQS), 353 to 392 (IPYD…TDHA), 413 to 458 (SVPF…SHIY), 469 to 488 (SAFS…GAWD), 493 to 563 (AEES…PRGP), 839 to 863 (TSRA…EPVH), and 1370 to 1400 (YDLD…SDSP). Positions 288–306 (SASMPSSSASRSPVAPRSP) are enriched in low complexity. Residues 308–325 (DNETTAFNPSGLSRSVGS) are compositionally biased toward polar residues. Over residues 434-447 (SVHSSSTNRSSGSS) the composition is skewed to low complexity. Over residues 448 to 458 (ARDDLAESHIY) the composition is skewed to basic and acidic residues. The span at 470–479 (AFSQTGSQGL) shows a compositional bias: polar residues. The span at 517 to 527 (PPQPDRIPSPE) shows a compositional bias: pro residues. A compositionally biased stretch (polar residues) spans 528–546 (QPSQDQKRNSPSFYAQDSS). A compositionally biased stretch (acidic residues) spans 1370 to 1392 (YDLDNDFDVPQELGDDADSDLDF).

Belongs to the ATG2 family.

It is found in the preautophagosomal structure membrane. The protein localises to the endoplasmic reticulum membrane. It catalyses the reaction a 1,2-diacyl-sn-glycero-3-phosphocholine(in) = a 1,2-diacyl-sn-glycero-3-phosphocholine(out). It carries out the reaction a 1,2-diacyl-sn-glycero-3-phospho-L-serine(in) = a 1,2-diacyl-sn-glycero-3-phospho-L-serine(out). The enzyme catalyses a 1,2-diacyl-sn-glycero-3-phosphoethanolamine(in) = a 1,2-diacyl-sn-glycero-3-phosphoethanolamine(out). In terms of biological role, lipid transfer protein required for autophagosome completion and peroxisome degradation. Tethers the edge of the isolation membrane (IM) to the endoplasmic reticulum (ER) and mediates direct lipid transfer from ER to IM for IM expansion. ATG2 binds to the ER exit site (ERES), which is the membrane source for autophagosome formation, using basic residues in its N-terminal region (NR) and to the expanding edge of the IM through its C-terminal region. The latter binding is assisted by an ATG18-PtdIns3P interaction. ATG2 then extracts phospholipids from the membrane source using its NR and transfers them to ATG9 to the IM through its predicted beta-sheet-rich structure for membrane expansion. The protein is Autophagy-related protein 2 (ATG2) of Chaetomium globosum (strain ATCC 6205 / CBS 148.51 / DSM 1962 / NBRC 6347 / NRRL 1970) (Soil fungus).